A 147-amino-acid polypeptide reads, in one-letter code: Acidic phospholipase A2 1 (147 aa).

An N-terminal signal peptide occupies residues 1–19 (MNPAHLLVLAAVCVSLLGA). Residues 20-27 (AIVPPQPL) constitute a propeptide that is removed on maturation. 7 disulfide bridges follow: cysteine 38–cysteine 99, cysteine 54–cysteine 146, cysteine 56–cysteine 72, cysteine 71–cysteine 127, cysteine 78–cysteine 120, cysteine 88–cysteine 113, and cysteine 106–cysteine 118. Ca(2+) contacts are provided by tyrosine 55, glycine 57, and glycine 59. The active site involves histidine 75. Aspartate 76 is a Ca(2+) binding site. Residue aspartate 121 is part of the active site.

The protein belongs to the phospholipase A2 family. Group I subfamily. D49 sub-subfamily. Ca(2+) serves as cofactor. As to expression, expressed by the venom gland.

The protein resides in the secreted. The catalysed reaction is a 1,2-diacyl-sn-glycero-3-phosphocholine + H2O = a 1-acyl-sn-glycero-3-phosphocholine + a fatty acid + H(+). PLA2 catalyzes the calcium-dependent hydrolysis of the 2-acyl groups in 3-sn-phosphoglycerides. The sequence is that of Acidic phospholipase A2 1 from Bungarus flaviceps flaviceps (Red-headed krait).